A 320-amino-acid polypeptide reads, in one-letter code: Adhesin MafA 1/4 (320 aa).

An N-terminal signal peptide occupies residues 1-18; sequence MRARLLIPILFSVFILSA. A lipid anchor (N-palmitoyl cysteine) is attached at cysteine 19. The S-diacylglycerol cysteine moiety is linked to residue cysteine 19. Residues 287 to 320 are disordered; that stretch reads NHTGNSAPSVEADNSHEGYGYSDEAVRQHRQGQP.

The protein belongs to the MafA family.

Its subcellular location is the cell outer membrane. The chain is Adhesin MafA 1/4 (mafA1) from Neisseria gonorrhoeae (strain ATCC 700825 / FA 1090).